The chain runs to 66 residues: Protein I177L (66 aa).

Residue N11 is glycosylated (N-linked (GlcNAc...) asparagine; by host).

The protein belongs to the asfivirus I177L family.

It is found in the virion. The chain is Protein I177L from African swine fever virus (strain Badajoz 1971 Vero-adapted) (Ba71V).